The sequence spans 78 residues: Large ribosomal subunit protein bL28 (78 aa).

It belongs to the bacterial ribosomal protein bL28 family.

The sequence is that of Large ribosomal subunit protein bL28 from Shigella boydii serotype 4 (strain Sb227).